Consider the following 162-residue polypeptide: MASSRVVLILSISMVLLSSVAIAATDYIVGDDKGWTVDFDYTQWAQDKVFRVGDNLVFNYDPSRHNVFKVNGTLFQSCTFPPKNEALSTGKDIIQLKTEGRKWYVCGVADHCSARQMKLVITVLAEGAPAPSPPPSSDAHSVVSSLFGVVMAIMVAIAVIFA.

Residues 1 to 23 (MASSRVVLILSISMVLLSSVAIA) form the signal peptide. Positions 25–125 (TDYIVGDDKG…QMKLVITVLA (101 aa)) constitute a Phytocyanin domain. A Cu cation-binding site is contributed by histidine 65. N-linked (GlcNAc...) asparagine glycosylation occurs at asparagine 71. Cysteine 78 and cysteine 112 are oxidised to a cystine. 3 residues coordinate Cu cation: cysteine 106, histidine 111, and methionine 117. The chain crosses the membrane as a helical span at residues 142–162 (VVSSLFGVVMAIMVAIAVIFA).

It localises to the membrane. This Medicago truncatula (Barrel medic) protein is Blue copper protein 1b.